The following is a 576-amino-acid chain: Aspartate--tRNA ligase (576 aa).

Glu171 is an L-aspartate binding site. The segment at 195 to 198 is aspartate; it reads QLFK. Arg217 lines the L-aspartate pocket. Residues 217–219 and Gln226 contribute to the ATP site; that span reads RDE. His450 is an L-aspartate binding site. Glu484 is an ATP binding site. Position 491 (Arg491) interacts with L-aspartate. Residue 536 to 539 participates in ATP binding; the sequence is GLDR.

The protein belongs to the class-II aminoacyl-tRNA synthetase family. Type 1 subfamily. In terms of assembly, homodimer.

The protein resides in the cytoplasm. It catalyses the reaction tRNA(Asp) + L-aspartate + ATP = L-aspartyl-tRNA(Asp) + AMP + diphosphate. Its function is as follows. Catalyzes the attachment of L-aspartate to tRNA(Asp) in a two-step reaction: L-aspartate is first activated by ATP to form Asp-AMP and then transferred to the acceptor end of tRNA(Asp). The protein is Aspartate--tRNA ligase of Buchnera aphidicola subsp. Baizongia pistaciae (strain Bp).